The chain runs to 397 residues: Transcription factor GATA-5 (397 aa).

Positions 48 to 116 are disordered; the sequence is GCEPSPQPPE…SAGGRDGSAY (69 aa). Low complexity predominate over residues 87 to 101; that stretch reads PPGATAFPFAHSPSG. Positions 102–112 are enriched in gly residues; that stretch reads PGSGGSAGGRD. GATA-type zinc fingers lie at residues 189–213 and 243–267; these read CVNCGALSTPLWRRDGTGHYLCNAC and CTNCHTTNTTLWRRNSEGEPVCNAC. The interval 281 to 356 is disordered; it reads AMKKESIQTR…ASGQEDDSLA (76 aa). Positions 289-298 are enriched in basic residues; sequence TRKRKPKTIA. Low complexity predominate over residues 310-335; sequence ASASPSAVASTDSSAATSKAKPSLAS.

Its subcellular location is the nucleus. In terms of biological role, transcription factor required during cardiovascular development. Plays an important role in the transcriptional program(s) that underlies smooth muscle cell diversity. Binds to the functionally important CEF-1 nuclear protein binding site in the cardiac-specific slow/cardiac troponin C transcriptional enhancer. The polypeptide is Transcription factor GATA-5 (Homo sapiens (Human)).